The sequence spans 764 residues: Thyrotropin receptor (764 aa).

The N-terminal stretch at 1–21 (MRPTPLLRLALLLVLPSSLWG) is a signal peptide. The Extracellular portion of the chain corresponds to 22 to 413 (ERCPSPPCEC…EFNPCEDIMG (392 aa)). The cysteines at positions 31 and 41 are disulfide-linked. The LRR 1 repeat unit spans residues 51–74 (PPSTQTLKFIETHLKTIPSRAFSN). Residues asparagine 77 and asparagine 99 are each glycosylated (N-linked (GlcNAc...) asparagine). LRR repeat units lie at residues 125–150 (LPLL…IYST), 152–174 (VFFI…AFQG), 176–199 (SNET…AFNG), 201–223 (KLDA…AFAG), and 225–248 (YSGP…GLEH). N-linked (GlcNAc...) asparagine glycosylation is found at asparagine 177 and asparagine 198. Residue asparagine 302 is glycosylated (N-linked (GlcNAc...) asparagine). Tyrosine 385 carries the post-translational modification Sulfotyrosine. The chain crosses the membrane as a helical span at residues 414–441 (YKFLRIVVWFVSLLALLGNVFVLVILLT). At 442-450 (SHYKLTVPR) the chain is on the cytoplasmic side. Residues 451–473 (FLMCNLAFADFCMGLYLLLIASV) traverse the membrane as a helical segment. The Extracellular segment spans residues 474–494 (DLYTQSEYYNHAIDWQTGPGC). A disulfide bridge links cysteine 494 with cysteine 569. The helical transmembrane segment at 495–517 (NTAGFFTVFASELSVYTLTVITL) threads the bilayer. Residues 518 to 537 (ERWYAITFAMHLDRKIRLWH) lie on the Cytoplasmic side of the membrane. The chain crosses the membrane as a helical span at residues 538–560 (AYVIMLGGWVCCFLLALLPLVGI). The Extracellular segment spans residues 561-580 (SSYAKVSICLPMDTETPLAL). Residues 581 to 602 (AYIILVLLLNIIAFIIVCACYV) traverse the membrane as a helical segment. The Cytoplasmic segment spans residues 603 to 625 (KIYITVRNPHYNPGDKDTRIAKR). Residues 626–649 (MAVLIFTDFMCMAPISFYALSALM) traverse the membrane as a helical segment. The Extracellular segment spans residues 650 to 660 (NKPLITVTNSK). Residues 661–682 (ILLVLFYPLNSCANPFLYAIFT) traverse the membrane as a helical segment. The Cytoplasmic portion of the chain corresponds to 683 to 764 (KAFQRDVFML…TSKEYKQTVL (82 aa)). The PDZ-binding signature appears at 762–764 (TVL).

This sequence belongs to the G-protein coupled receptor 1 family. FSH/LSH/TSH subfamily. Interacts with heterodimer GPHA2:GPHB5; this interaction stimulates cAMP production. Interacts (via the PDZ-binding motif) with SCRIB; regulates TSHR trafficking and function. In terms of processing, glycosylated. Sulfated. Sulfation on Tyr-385 plays a role in thyrotropin receptor binding and activation.

Its subcellular location is the cell membrane. It localises to the basolateral cell membrane. Its function is as follows. Receptor for the thyroid-stimulating hormone (TSH) or thyrotropin. Also acts as a receptor for the heterodimeric glycoprotein hormone (GPHA2:GPHB5) or thyrostimulin. The activity of this receptor is mediated by G proteins which activate adenylate cyclase. Plays a central role in controlling thyroid cell metabolism. The chain is Thyrotropin receptor (TSHR) from Ovis aries (Sheep).